A 418-amino-acid chain; its full sequence is Gamma-glutamyl phosphate reductase (418 aa).

Belongs to the gamma-glutamyl phosphate reductase family.

Its subcellular location is the cytoplasm. It carries out the reaction L-glutamate 5-semialdehyde + phosphate + NADP(+) = L-glutamyl 5-phosphate + NADPH + H(+). It participates in amino-acid biosynthesis; L-proline biosynthesis; L-glutamate 5-semialdehyde from L-glutamate: step 2/2. Catalyzes the NADPH-dependent reduction of L-glutamate 5-phosphate into L-glutamate 5-semialdehyde and phosphate. The product spontaneously undergoes cyclization to form 1-pyrroline-5-carboxylate. This Geotalea daltonii (strain DSM 22248 / JCM 15807 / FRC-32) (Geobacter daltonii) protein is Gamma-glutamyl phosphate reductase.